The sequence spans 75 residues: MALVKKSLFLVLFLGLVSLSICEEKRENEDEEEQEDDEQSEEKRALWKTLLKKVGKVAGKAVLNAVTNMANQNEQ.

Residues Met-1 to Cys-22 form the signal peptide. A propeptide spanning residues Glu-23–Glu-42 is cleaved from the precursor.

It belongs to the frog skin active peptide (FSAP) family. Dermaseptin subfamily. In terms of tissue distribution, expressed by the skin glands.

The protein localises to the secreted. Its function is as follows. Possesses a potent antimicrobial activity against Gram-positive and Gram-negative bacteria. Probably acts by disturbing membrane functions with its amphipathic structure. In Agalychnis dacnicolor (Giant Mexican leaf frog), this protein is Dermaseptin-DA2.